The primary structure comprises 362 residues: MNFLHSTLDRLREFTPVSNTSTFRTNGQITPEEFVAAGDYLVFKFPTWSWADASPTSKRASYLPAGKQFLVTRGVPCHRRLDDDFAGEAGHDETVVGDGEDFRGTGHSPGDDEDGWLRTGGLAASQEARARDVRTVDESGEMGEREDDEDDIPDMEDEDDDDEAIIRDPKADNANSSRRTYTIYIAYTPYYRTPRLYLSGYLSSSQPLPPHLMMEDIVGDYKDKTVTLEDFPYFSNNIKMASIHPCKHASVMKTLLDRADAALKLRREKQKQGKTVPGAKDTGMEGLVDDFEKTKISDKKAMLEGLKAGGNGNDEWEVLQHDQDFASEEEEVAIRVDQYLVVFLKFMASVTPGIEHDFTMGV.

The interval 84–168 is flexible region; sequence DFAGEAGHDE…DDDDEAIIRD (85 aa). Composition is skewed to basic and acidic residues over residues 85–104 and 128–137; these read FAGE…DFRG and ARARDVRTVD. Positions 85-164 are disordered; the sequence is FAGEAGHDET…MEDEDDDDEA (80 aa). A compositionally biased stretch (acidic residues) spans 138 to 163; sequence ESGEMGEREDDEDDIPDMEDEDDDDE. Cysteine 246 functions as the Glycyl thioester intermediate in the catalytic mechanism. The interval 250–338 is handle region; sequence SVMKTLLDRA…EEEVAIRVDQ (89 aa).

Belongs to the ATG3 family. Monomer. Interacts with atg8 through an intermediate thioester bond through the C-terminal Gly of atg8. Also interacts with the 40 amino acid C-terminal region of the E1-like atg7 enzyme. Also interacts with the atg12-atg5 conjugate.

It localises to the cytoplasm. In terms of biological role, E2 conjugating enzyme required for the cytoplasm to vacuole transport (Cvt) and autophagy. Required for selective autophagic degradation of the nucleus (nucleophagy) as well as for mitophagy which contributes to regulate mitochondrial quantity and quality by eliminating the mitochondria to a basal level to fulfill cellular energy requirements and preventing excess ROS production. Responsible for the E2-like covalent binding of phosphatidylethanolamine to the C-terminal Gly of atg8. The atg12-atg5 conjugate plays a role of an E3 and promotes the transfer of atg8 from atg3 to phosphatidylethanolamine (PE). This step is required for the membrane association of atg8. The formation of the atg8-phosphatidylethanolamine conjugate is essential for autophagy and for the cytoplasm to vacuole transport (Cvt). The atg8-PE conjugate mediates tethering between adjacent membranes and stimulates membrane hemifusion, leading to expansion of the autophagosomal membrane during autophagy. This is Autophagy-related protein 3 (atg3) from Sclerotinia sclerotiorum (strain ATCC 18683 / 1980 / Ss-1) (White mold).